Consider the following 82-residue polypeptide: Sulfur carrier protein TusA (82 aa).

C19 functions as the Cysteine persulfide intermediate in the catalytic mechanism.

Belongs to the sulfur carrier protein TusA family.

The protein resides in the cytoplasm. In terms of biological role, sulfur carrier protein which probably makes part of a sulfur-relay system. This is Sulfur carrier protein TusA from Photobacterium profundum (strain SS9).